Reading from the N-terminus, the 84-residue chain is uncharacterized protein (84 aa).

This is an uncharacterized protein from Caenorhabditis elegans.